We begin with the raw amino-acid sequence, 606 residues long: MNMFSSCMITALVILTLPIIMSSTKLYKNKLYPYYVKTATSYAFMISMIPTMMFIYSGQETIISNWHWMTIQTMKLSMSFKLDYFSMIFVPVALFVTWSIMEFSMWYMHSDPYINRFFKYLLLFLITMMVLVTANNMFQLFIGWEGVGIMSFLLIGWWYGRTDANTAALQAVLYNRIGDVGFIMTMAWFLLNLNTWDLQQIFITTNDNFNLPLLGLLLAATGKSAQFGLHPWLPSAMEGPTPVSALLHSSTMVVAGVFLLIRFHPLMEHNQTIQTLTLCLGAITTLFTAICALTQNDIKKIVAFSTSSQLGLMMVTIGINQPYLAFLHICTHAFFKAMLFMCSGSIIHSLNDEQDIRKMGGLFKVLPFTTTSLIIGSLALTGMPFLTGFYSKDLIIESANTSNTNAWALLITLVATSLTAAYSTRIMFFALLGQPRFSPMILINENNPLLINSIKRLLIGSVFAGYIISHSITPTTIPQMTMPHYLKMTALAVTILGFILALELNLTTQGLKFNYPSNYFKFSSLLGYYPTIMHRLTPKTSLTISQKSASMLLDSIWLENILPKSISYFQMKSSTLISNQKGLIKLYFLSFMLTMILSLLILNYHG.

14 helical membrane-spanning segments follow: residues 1 to 21 (MNMF…PIIM), 43 to 63 (AFMI…ETII), 87 to 107 (MIFV…SMWY), 117 to 137 (FFKY…ANNM), 140 to 160 (LFIG…WWYG), 171 to 191 (AVLY…WFLL), 241 to 261 (TPVS…FLLI), 273 to 293 (IQTL…ICAL), 310 to 330 (LGLM…LHIC), 365 to 385 (VLPF…GMPF), 409 to 429 (LLIT…IMFF), 457 to 477 (LLIG…PTTI), 488 to 508 (MTAL…NLTT), and 582 to 602 (GLIK…LLIL).

This sequence belongs to the complex I subunit 5 family. Core subunit of respiratory chain NADH dehydrogenase (Complex I) which is composed of 45 different subunits.

The protein localises to the mitochondrion inner membrane. It carries out the reaction a ubiquinone + NADH + 5 H(+)(in) = a ubiquinol + NAD(+) + 4 H(+)(out). Functionally, core subunit of the mitochondrial membrane respiratory chain NADH dehydrogenase (Complex I) which catalyzes electron transfer from NADH through the respiratory chain, using ubiquinone as an electron acceptor. Essential for the catalytic activity and assembly of complex I. This is NADH-ubiquinone oxidoreductase chain 5 (MT-ND5) from Canis lupus (Gray wolf).